The primary structure comprises 181 residues: Gastrokine-3 (181 aa).

The signal sequence occupies residues 1 to 20; it reads MKHLVASSILGVFVLTPSLA. Positions 53-145 constitute a BRICHOS domain; it reads NNIFSEWDGI…MCRDDPTYFA (93 aa). Cysteine 80 and cysteine 137 are disulfide-bonded.

The protein belongs to the gastrokine family.

The protein localises to the secreted. In terms of biological role, may inhibit gastric epithelial cell proliferation. The protein is Gastrokine-3 (GKN3P) of Homo sapiens (Human).